The sequence spans 272 residues: Hemin import ATP-binding protein HmuV (272 aa).

The region spanning 2–255 (LNAEHLHVAR…DLIERCYGFR (254 aa)) is the ABC transporter domain. Residue 34-41 (GRNGAGKS) participates in ATP binding.

Belongs to the ABC transporter superfamily. Heme (hemin) importer (TC 3.A.1.14.5) family. In terms of assembly, the complex is composed of two ATP-binding proteins (HmuV), two transmembrane proteins (HmuU) and a solute-binding protein (HmuT).

Its subcellular location is the cell inner membrane. Part of the ABC transporter complex HmuTUV involved in hemin import. Responsible for energy coupling to the transport system. This Burkholderia thailandensis (strain ATCC 700388 / DSM 13276 / CCUG 48851 / CIP 106301 / E264) protein is Hemin import ATP-binding protein HmuV.